A 391-amino-acid polypeptide reads, in one-letter code: Protein-glutamate methylesterase/protein-glutamine glutaminase (391 aa).

The Response regulatory domain occupies 4–121 (KVLVVDDSSF…ARNNEDAIKL (118 aa)). Residue aspartate 55 is modified to 4-aspartylphosphate. Residues 197–391 (SGKHYQLVAI…IRLKTEVGCG (195 aa)) form the CheB-type methylesterase domain. Active-site residues include serine 209, histidine 236, and aspartate 333.

This sequence belongs to the CheB family. Post-translationally, phosphorylated by CheA. Phosphorylation of the N-terminal regulatory domain activates the methylesterase activity.

It is found in the cytoplasm. It catalyses the reaction [protein]-L-glutamate 5-O-methyl ester + H2O = L-glutamyl-[protein] + methanol + H(+). The catalysed reaction is L-glutaminyl-[protein] + H2O = L-glutamyl-[protein] + NH4(+). Functionally, involved in chemotaxis. Part of a chemotaxis signal transduction system that modulates chemotaxis in response to various stimuli. Catalyzes the demethylation of specific methylglutamate residues introduced into the chemoreceptors (methyl-accepting chemotaxis proteins or MCP) by CheR. Also mediates the irreversible deamidation of specific glutamine residues to glutamic acid. This chain is Protein-glutamate methylesterase/protein-glutamine glutaminase, found in Pseudoalteromonas translucida (strain TAC 125).